Consider the following 92-residue polypeptide: Protease inhibitors (92 aa).

A signal peptide spans 1–19 (MKFALALCAAVLLVVLVQA). 2 Pacifastin domains span residues 20–54 (EEKC…CQPA) and 57–92 (EISC…CPNQ). 6 disulfide bridges follow: Cys23/Cys38, Cys33/Cys51, Cys36/Cys46, Cys60/Cys75, Cys70/Cys89, and Cys73/Cys84. Thr65 carries O-linked (Fuc) threonine glycosylation.

Belongs to the protease inhibitor I19 family. In terms of tissue distribution, brain and fat body.

The protein localises to the secreted. Functionally, both LCMI I and II are inhibitors of chymotrypsin and elastase (in vitro). They both inhibit the prophenol oxidase activation cascade. The polypeptide is Protease inhibitors (Locusta migratoria (Migratory locust)).